The chain runs to 345 residues: Myb/SANT-like DNA-binding domain-containing protein 4 (345 aa).

The 74-residue stretch at 4 to 77 (LKRKRKSNFS…EVKRRYLDWR (74 aa)) folds into the Myb-like domain. Lys9 is covalently cross-linked (Glycyl lysine isopeptide (Lys-Gly) (interchain with G-Cter in SUMO2)). Ser106 is subject to Phosphoserine. Residues Lys114 and Lys142 each participate in a glycyl lysine isopeptide (Lys-Gly) (interchain with G-Cter in SUMO2) cross-link. The interval 143-175 (VEEEERDPQSPEFEIEEEEEMLSSVIPDSRREN) is disordered. Thr188 bears the Phosphothreonine mark. Positions 203-345 (LLVNIEKQKL…LRIQKEGHLQ (143 aa)) form a coiled coil. Residues Lys237, Lys254, and Lys273 each participate in a glycyl lysine isopeptide (Lys-Gly) (interchain with G-Cter in SUMO2) cross-link.

In Homo sapiens (Human), this protein is Myb/SANT-like DNA-binding domain-containing protein 4 (MSANTD4).